The sequence spans 191 residues: MTIKLIVGLGNPGKDYQSNRHNAGFWLCEALAHLYAGNFKKETKFFGEVAQINISGRKVRLLKPTVFMNCSGQSIQSIVNFYQINTNEILIVHDELDIDPGIAKIKFDGGHGGHNGLRDTIQTLGTKAFHRLRIGIGHPGDKSQVTNFVLHAPSKGELEKIQNSLNNSLQIIEDMINGNFDKAIKTLHTKE.

Residue tyrosine 16 participates in tRNA binding. Histidine 21 acts as the Proton acceptor in catalysis. TRNA-binding residues include phenylalanine 67, asparagine 69, and asparagine 115.

It belongs to the PTH family. As to quaternary structure, monomer.

The protein resides in the cytoplasm. It carries out the reaction an N-acyl-L-alpha-aminoacyl-tRNA + H2O = an N-acyl-L-amino acid + a tRNA + H(+). Hydrolyzes ribosome-free peptidyl-tRNAs (with 1 or more amino acids incorporated), which drop off the ribosome during protein synthesis, or as a result of ribosome stalling. In terms of biological role, catalyzes the release of premature peptidyl moieties from peptidyl-tRNA molecules trapped in stalled 50S ribosomal subunits, and thus maintains levels of free tRNAs and 50S ribosomes. The protein is Peptidyl-tRNA hydrolase of Ruthia magnifica subsp. Calyptogena magnifica.